A 494-amino-acid chain; its full sequence is DnaJ-related protein rsp1 (494 aa).

The 67-residue stretch at 12–78 (DYYTILGAES…KLRELFDQRR (67 aa)) folds into the J domain. Over residues 229 to 242 (SEISNGLNSNGVEN) the composition is skewed to polar residues. Residues 229–354 (SEISNGLNSN…NDSTSNSTEY (126 aa)) are disordered. Low complexity predominate over residues 243-256 (SSITKSSPRSSSSS). Residues 270-287 (IFTSPNTPEHPSVYQTDI) show a composition bias toward polar residues. Low complexity predominate over residues 321–331 (LSRSKSSSLSR). Polar residues predominate over residues 332 to 354 (NQTRSQLNDLSAENDSTSNSTEY).

In terms of assembly, interacts iwth ssa1.

Its subcellular location is the cytoplasm. It localises to the cytoskeleton. The protein localises to the nucleus. In terms of biological role, has a role in the proper organization of the interphase microtubule cytoskeleton. Required for equatorial microtubule organizing center (eMTOC) disassembly into satellites, contributing to the dynamic redistribution of MTOC components for organization of interphase microtubules. The sequence is that of DnaJ-related protein rsp1 (rsp1) from Schizosaccharomyces pombe (strain 972 / ATCC 24843) (Fission yeast).